A 286-amino-acid chain; its full sequence is Bifunctional protein FolD 2 (286 aa).

NADP(+) is bound by residues 165–167 (GRG), Thr192, and Ile233.

It belongs to the tetrahydrofolate dehydrogenase/cyclohydrolase family. In terms of assembly, homodimer.

The enzyme catalyses (6R)-5,10-methylene-5,6,7,8-tetrahydrofolate + NADP(+) = (6R)-5,10-methenyltetrahydrofolate + NADPH. The catalysed reaction is (6R)-5,10-methenyltetrahydrofolate + H2O = (6R)-10-formyltetrahydrofolate + H(+). The protein operates within one-carbon metabolism; tetrahydrofolate interconversion. Functionally, catalyzes the oxidation of 5,10-methylenetetrahydrofolate to 5,10-methenyltetrahydrofolate and then the hydrolysis of 5,10-methenyltetrahydrofolate to 10-formyltetrahydrofolate. This chain is Bifunctional protein FolD 2, found in Salinispora arenicola (strain CNS-205).